The primary structure comprises 279 residues: 4-diphosphocytidyl-2-C-methyl-D-erythritol kinase (279 aa).

Lysine 11 is a catalytic residue. 95-105 (PVAAGLGGGSS) provides a ligand contact to ATP. The active site involves aspartate 137.

Belongs to the GHMP kinase family. IspE subfamily.

The catalysed reaction is 4-CDP-2-C-methyl-D-erythritol + ATP = 4-CDP-2-C-methyl-D-erythritol 2-phosphate + ADP + H(+). The protein operates within isoprenoid biosynthesis; isopentenyl diphosphate biosynthesis via DXP pathway; isopentenyl diphosphate from 1-deoxy-D-xylulose 5-phosphate: step 3/6. Catalyzes the phosphorylation of the position 2 hydroxy group of 4-diphosphocytidyl-2C-methyl-D-erythritol. The protein is 4-diphosphocytidyl-2-C-methyl-D-erythritol kinase of Geotalea daltonii (strain DSM 22248 / JCM 15807 / FRC-32) (Geobacter daltonii).